The sequence spans 297 residues: Protein-methionine-sulfoxide reductase catalytic subunit MsrP (297 aa).

Residues 1 to 35 constitute a signal peptide (tat-type signal); sequence MLITPEKLYKQRRNFLKLGAGALISSSVLASKLSA. Residues 62–63, cysteine 116, threonine 151, asparagine 201, arginine 206, and 217–219 contribute to the Mo-molybdopterin site; these read YE and SIK.

The protein belongs to the MsrP family. Heterodimer of a catalytic subunit (MsrP) and a heme-binding subunit (MsrQ). Mo-molybdopterin serves as cofactor. In terms of processing, predicted to be exported by the Tat system. The position of the signal peptide cleavage has not been experimentally proven.

The protein resides in the periplasm. It carries out the reaction L-methionyl-[protein] + a quinone + H2O = L-methionyl-(S)-S-oxide-[protein] + a quinol. The enzyme catalyses L-methionyl-[protein] + a quinone + H2O = L-methionyl-(R)-S-oxide-[protein] + a quinol. In terms of biological role, part of the MsrPQ system that repairs oxidized periplasmic proteins containing methionine sulfoxide residues (Met-O), using respiratory chain electrons. Thus protects these proteins from oxidative-stress damage caused by reactive species of oxygen and chlorine generated by the host defense mechanisms. MsrPQ is essential for the maintenance of envelope integrity under bleach stress, rescuing a wide series of structurally unrelated periplasmic proteins from methionine oxidation. The catalytic subunit MsrP is non-stereospecific, being able to reduce both (R-) and (S-) diastereoisomers of methionine sulfoxide. The chain is Protein-methionine-sulfoxide reductase catalytic subunit MsrP from Campylobacter jejuni subsp. jejuni serotype O:2 (strain ATCC 700819 / NCTC 11168).